We begin with the raw amino-acid sequence, 404 residues long: MHAWPDPSVPVVAGTPVPLKLFDTADQRVKEVDTTPDANGEVGMYVCGITPYDSTHLGHAATYLTFDLAQRQLLANGHKVHYAQNITDVDDPLFERAERDGVDWRELGTSQINLFRSDMEILSVIPPRDYIGAMESVDEVIAMVQQLLDAGAAYELDQGDIYASIDATEQFGYESNLDRATMEEYFAERGGDPDREGKRDPLDALIWRGHREGEPAWDSPFGPGRPGWHVECSAIATNRLGSHFAIQGGGSDLAFPHHEFSAAHAEAALKVERMAGHYVHAGMIALDGVKMSKSLGNLVFVHKLSEAGHDPSAIRLAVFAGHYREDRDFSDAILAEAEERLTRWREQLAGEVSEAEATEVVDKLRAILADDLNTPEALSLLDGAAGDCNQIIATALDGLLGVRI.

Cys47 lines the Zn(2+) pocket. Residues 47–50, Thr62, and 85–87 contribute to the L-cysteinyl-5'-AMP site; these read CGIT and NIT. Residues 49–59 carry the 'HIGH' region motif; that stretch reads ITPYDSTHLGH. Positions 188–193 match the 'ERGGDP' region motif; that stretch reads ERGGDP. Trp228 is a binding site for L-cysteinyl-5'-AMP. Cys232 contributes to the Zn(2+) binding site. 250–252 is a binding site for L-cysteinyl-5'-AMP; it reads GSD. Residue His257 participates in Zn(2+) binding. Ile284 contacts L-cysteinyl-5'-AMP. The 'KMSKS' region signature appears at 290–294; that stretch reads KMSKS.

Belongs to the class-I aminoacyl-tRNA synthetase family. MshC subfamily. Monomer. Requires Zn(2+) as cofactor.

It catalyses the reaction 1D-myo-inositol 2-amino-2-deoxy-alpha-D-glucopyranoside + L-cysteine + ATP = 1D-myo-inositol 2-(L-cysteinylamino)-2-deoxy-alpha-D-glucopyranoside + AMP + diphosphate + H(+). Its function is as follows. Catalyzes the ATP-dependent condensation of GlcN-Ins and L-cysteine to form L-Cys-GlcN-Ins. The polypeptide is L-cysteine:1D-myo-inositol 2-amino-2-deoxy-alpha-D-glucopyranoside ligase 1 (Corynebacterium jeikeium (strain K411)).